A 433-amino-acid chain; its full sequence is Glutamate--tRNA ligase (433 aa).

Positions 10 to 20 match the 'HIGH' region motif; that stretch reads PSPTGYLHIGG. The 'KMSKS' region signature appears at 211-215; sequence KMSKR. Lysine 214 is a binding site for ATP.

The protein belongs to the class-I aminoacyl-tRNA synthetase family. Glutamate--tRNA ligase type 1 subfamily. Monomer.

It localises to the cytoplasm. The enzyme catalyses tRNA(Glu) + L-glutamate + ATP = L-glutamyl-tRNA(Glu) + AMP + diphosphate. Functionally, catalyzes the attachment of glutamate to tRNA(Glu) in a two-step reaction: glutamate is first activated by ATP to form Glu-AMP and then transferred to the acceptor end of tRNA(Glu). The chain is Glutamate--tRNA ligase from Akkermansia muciniphila (strain ATCC BAA-835 / DSM 22959 / JCM 33894 / BCRC 81048 / CCUG 64013 / CIP 107961 / Muc).